The sequence spans 274 residues: Cytochrome b-c1 complex subunit Rieske, mitochondrial (274 aa).

The Mitochondrial matrix segment spans residues 79–103 (SHTDIKVPDFSEYRRLEVLDSTKSS). A helical membrane pass occupies residues 104-140 (RESSEARKGFSYLVTGVTTVGVAYAAKNAVTQFVSSM). At 141–274 (SASADVLALA…FTSDDMVIVG (134 aa)) the chain is on the mitochondrial intermembrane side. Residues 187-272 (EAAVELSQLR…YEFTSDDMVI (86 aa)) enclose the Rieske domain. [2Fe-2S] cluster contacts are provided by cysteine 217, histidine 219, cysteine 236, histidine 239, and serine 241. Cysteine 222 and cysteine 238 are oxidised to a cystine.

The protein belongs to the Rieske iron-sulfur protein family. Component of the ubiquinol-cytochrome c oxidoreductase (cytochrome b-c1 complex, complex III, CIII), a multisubunit enzyme composed of 11 subunits. The complex is composed of 3 respiratory subunits cytochrome b, cytochrome c1 and Rieske protein UQCRFS1, 2 core protein subunits UQCRC1/QCR1 and UQCRC2/QCR2, and 6 low-molecular weight protein subunits UQCRH/QCR6, UQCRB/QCR7, UQCRQ/QCR8, UQCR10/QCR9, UQCR11/QCR10 and subunit 9, the cleavage product of Rieske protein UQCRFS1. The complex exists as an obligatory dimer and forms supercomplexes (SCs) in the inner mitochondrial membrane with NADH-ubiquinone oxidoreductase (complex I, CI) and cytochrome c oxidase (complex IV, CIV), resulting in different assemblies (supercomplex SCI(1)III(2)IV(1) and megacomplex MCI(2)III(2)IV(2)). Incorporation of the Rieske protein UQCRFS1 is the penultimate step in complex III assembly. Interacts with TTC19, which is involved in the clearance of UQCRFS1 fragments. As to quaternary structure, component of the ubiquinol-cytochrome c oxidoreductase (cytochrome b-c1 complex, complex III, CIII). Subunit 9 corresponds to the mitochondrial targeting sequence (MTS) of Rieske protein UQCRFS1. It is retained after processing and incorporated inside complex III, where it remains bound to the complex and localizes between the 2 core subunits UQCRC1/QCR1 and UQCRC2/QCR2. The cofactor is [2Fe-2S] cluster. Proteolytic processing is necessary for the correct insertion of UQCRFS1 in the complex III dimer. Several fragments are generated during UQCRFS1 insertion, most probably due to the endogenous matrix-processing peptidase (MPP) activity of the 2 core protein subunits UQCRC1/QCR1 and UQCRC2/QCR2, which are homologous to the 2 mitochondrial-processing peptidase (MPP) subunits beta-MPP and alpha-MPP respectively. The action of the protease is also necessary for the clearance of the UQCRFS1 fragments.

The protein localises to the mitochondrion inner membrane. It carries out the reaction a quinol + 2 Fe(III)-[cytochrome c](out) = a quinone + 2 Fe(II)-[cytochrome c](out) + 2 H(+)(out). Component of the ubiquinol-cytochrome c oxidoreductase, a multisubunit transmembrane complex that is part of the mitochondrial electron transport chain which drives oxidative phosphorylation. The respiratory chain contains 3 multisubunit complexes succinate dehydrogenase (complex II, CII), ubiquinol-cytochrome c oxidoreductase (cytochrome b-c1 complex, complex III, CIII) and cytochrome c oxidase (complex IV, CIV), that cooperate to transfer electrons derived from NADH and succinate to molecular oxygen, creating an electrochemical gradient over the inner membrane that drives transmembrane transport and the ATP synthase. The cytochrome b-c1 complex catalyzes electron transfer from ubiquinol to cytochrome c, linking this redox reaction to translocation of protons across the mitochondrial inner membrane, with protons being carried across the membrane as hydrogens on the quinol. In the process called Q cycle, 2 protons are consumed from the matrix, 4 protons are released into the intermembrane space and 2 electrons are passed to cytochrome c. The Rieske protein is a catalytic core subunit containing a [2Fe-2S] iron-sulfur cluster. It cycles between 2 conformational states during catalysis to transfer electrons from the quinol bound in the Q(0) site in cytochrome b to cytochrome c1. Incorporation of UQCRFS1 is the penultimate step in complex III assembly. In terms of biological role, component of the ubiquinol-cytochrome c oxidoreductase (cytochrome b-c1 complex, complex III, CIII). UQCRFS1 undergoes proteolytic processing once it is incorporated in the complex III dimer. One of the fragments, called subunit 9, corresponds to its mitochondrial targeting sequence (MTS). The proteolytic processing is necessary for the correct insertion of UQCRFS1 in the complex III dimer, but the persistence of UQCRFS1-derived fragments may prevent newly imported UQCRFS1 to be processed and assembled into complex III and is detrimental for the complex III structure and function. The chain is Cytochrome b-c1 complex subunit Rieske, mitochondrial (UQCRFS1) from Gorilla gorilla gorilla (Western lowland gorilla).